The primary structure comprises 347 residues: uncharacterized protein (347 aa).

The first 21 residues, 1-21, serve as a signal peptide directing secretion; sequence MNKKSLNIVVMFGILMILAFS.

Belongs to the bacterial solute-binding protein 1 family. WtpA subfamily.

This is an uncharacterized protein from Methanococcus maripaludis (strain C5 / ATCC BAA-1333).